Reading from the N-terminus, the 389-residue chain is NADH-dependent butanol dehydrogenase A (389 aa).

The protein belongs to the iron-containing alcohol dehydrogenase family. As to quaternary structure, homodimer.

It participates in alcohol metabolism; butanol biosynthesis. The polypeptide is NADH-dependent butanol dehydrogenase A (bdhA) (Clostridium acetobutylicum (strain ATCC 824 / DSM 792 / JCM 1419 / IAM 19013 / LMG 5710 / NBRC 13948 / NRRL B-527 / VKM B-1787 / 2291 / W)).